Consider the following 391-residue polypeptide: Serine protease 7 (391 aa).

Residues 1–27 form the signal peptide; that stretch reads MKSTRKVVGIFLATCLLPFTVLQNVAA. A propeptide spans 28-136 (activation peptide); sequence QGSCRNPNQK…KCGPHSFSNK (109 aa). The 55-residue stretch at 30-84 folds into the Clip domain; that stretch reads SCRNPNQKQGQCLSIYDCQSLLSVIQQSYVSPEDRTFLRNSQCLDGVGRQPYVCC. 3 disulfide bridges follow: C31–C83, C41–C72, and C47–C84. Residues 91–121 are disordered; it reads GSQEATSAAPPPTTTSSSSRGQDGQAGLGNL. 5 disulfides stabilise this stretch: C128–C264, C167–C183, C211–C216, C310–C327, and C337–C366. The Peptidase S1 domain maps to 137–390; that stretch reads VYNGNDTAID…YMDWIVETIR (254 aa). N-linked (GlcNAc...) asparagine glycosylation occurs at N141. The active-site Charge relay system is H182. Ca(2+) contacts are provided by E202, D204, K207, and D210. D244 acts as the Charge relay system in catalysis. S341 (charge relay system) is an active-site residue.

Belongs to the peptidase S1 family. CLIP subfamily. In terms of assembly, interacts with Spn27A.

It localises to the secreted. Its function is as follows. Serine protease that, by cleaving and activating prophenoloxidase (PPO1) after immune challenge, plays an essential role in the melanization immune response to septic wounding. May function in diverse Hayan-dependent PPO1-activating cascades that are negatively controlled by different serpin proteins; Spn27A in the hemolymph and Spn77BA in the trachea. Important for the innate immune response to fungi. Regulation of melanization and PPO1 activation appears to be largely independent of the Toll signaling pathway. The sequence is that of Serine protease 7 from Drosophila melanogaster (Fruit fly).